The chain runs to 387 residues: 4-hydroxy-3-methylbut-2-en-1-yl diphosphate synthase (flavodoxin) (387 aa).

Cysteine 293, cysteine 296, cysteine 328, and glutamate 335 together coordinate [4Fe-4S] cluster.

The protein belongs to the IspG family. The cofactor is [4Fe-4S] cluster.

It carries out the reaction (2E)-4-hydroxy-3-methylbut-2-enyl diphosphate + oxidized [flavodoxin] + H2O + 2 H(+) = 2-C-methyl-D-erythritol 2,4-cyclic diphosphate + reduced [flavodoxin]. Its pathway is isoprenoid biosynthesis; isopentenyl diphosphate biosynthesis via DXP pathway; isopentenyl diphosphate from 1-deoxy-D-xylulose 5-phosphate: step 5/6. Its function is as follows. Converts 2C-methyl-D-erythritol 2,4-cyclodiphosphate (ME-2,4cPP) into 1-hydroxy-2-methyl-2-(E)-butenyl 4-diphosphate. This chain is 4-hydroxy-3-methylbut-2-en-1-yl diphosphate synthase (flavodoxin), found in Treponema denticola (strain ATCC 35405 / DSM 14222 / CIP 103919 / JCM 8153 / KCTC 15104).